We begin with the raw amino-acid sequence, 292 residues long: MKSKPDWLKVKMPTGSAFYEMRNLMKLHKLNTVCEEAACPNIGECWNKKHATVMILGSTCTRACAFCNVASGIPDKLDPHEPQSLAKAVSSLKLQHVVITSVDRDDLEDGGAGHFVECIEEIRKRDSNVTIEILTPDFLNKHDAIDKIAKAFPDVYNHNVETVPRLYAKIRPKARYFHSLYLLKTIKQKNPRIFTKSGIMVGLGELKEEIYQVMDDLRSADVDFIVIGQYLQPTSKHAVVDRYVTPEEFDHYKYVAYSKGFLMVASGPLVRSSYHAEEDFQRLKKNRAAMYT.

Positions 34, 39, 45, 60, 64, 67, and 273 each coordinate [4Fe-4S] cluster. The Radical SAM core domain occupies 46 to 262 (WNKKHATVMI…KYVAYSKGFL (217 aa)).

The protein belongs to the radical SAM superfamily. Lipoyl synthase family. Requires [4Fe-4S] cluster as cofactor.

The protein localises to the cytoplasm. It catalyses the reaction [[Fe-S] cluster scaffold protein carrying a second [4Fe-4S](2+) cluster] + N(6)-octanoyl-L-lysyl-[protein] + 2 oxidized [2Fe-2S]-[ferredoxin] + 2 S-adenosyl-L-methionine + 4 H(+) = [[Fe-S] cluster scaffold protein] + N(6)-[(R)-dihydrolipoyl]-L-lysyl-[protein] + 4 Fe(3+) + 2 hydrogen sulfide + 2 5'-deoxyadenosine + 2 L-methionine + 2 reduced [2Fe-2S]-[ferredoxin]. The protein operates within protein modification; protein lipoylation via endogenous pathway; protein N(6)-(lipoyl)lysine from octanoyl-[acyl-carrier-protein]: step 2/2. Its function is as follows. Catalyzes the radical-mediated insertion of two sulfur atoms into the C-6 and C-8 positions of the octanoyl moiety bound to the lipoyl domains of lipoate-dependent enzymes, thereby converting the octanoylated domains into lipoylated derivatives. The polypeptide is Lipoyl synthase (Ehrlichia ruminantium (strain Welgevonden)).